We begin with the raw amino-acid sequence, 309 residues long: Taste receptor type 2 member 46 (309 aa).

Residue M1 is a topological domain, extracellular. Residues 2–22 (ITFLPIIFSILIVVTFVIGNF) traverse the membrane as a helical segment. Residues 23–46 (ANGFIALANSIEWFKRQKISFADQ) lie on the Cytoplasmic side of the membrane. Residues 47-67 (ILTALAVSRVGLLWVLLLNWY) form a helical membrane-spanning segment. Residues 68–86 (ATELNPAFYSIEVRITAYN) are Extracellular-facing. The helical transmembrane segment at 87–107 (LWAVINHFSNWLATSLSIFYL) threads the bilayer. The Cytoplasmic segment spans residues 108-126 (LKIANFSNLIFLCLKRRVK). A helical membrane pass occupies residues 127-147 (SVVLVILLGPLLFLVCHLFVI). Residues 148–178 (NMNQIIWTKEYEGNMTWKIKLRSAMYLSNTT) lie on the Extracellular side of the membrane. N-linked (GlcNAc...) asparagine glycans are attached at residues N161 and N176. A helical transmembrane segment spans residues 179 to 199 (VTILANLVPFTLTLISFLLLI). Residues 200-229 (CSLCKHLEKMQLHGKGSQDPSMKVHIKALQ) are Cytoplasmic-facing. The helical transmembrane segment at 230–250 (TVTSFLLLCAIYFLSIIMSVW) threads the bilayer. The Extracellular portion of the chain corresponds to 251–259 (SFESLENKP). Residues 260–280 (VFMFCEAITFSYPSTHPFILI) form a helical membrane-spanning segment. The Cytoplasmic portion of the chain corresponds to 281–309 (WGNKKLKQTFLSVLWHVRYWVKGEKPSXP).

It belongs to the G-protein coupled receptor T2R family.

The protein resides in the membrane. It is found in the cell projection. It localises to the cilium membrane. In terms of biological role, receptor that may play a role in the perception of bitterness and is gustducin-linked. May play a role in sensing the chemical composition of the gastrointestinal content. The activity of this receptor may stimulate alpha gustducin, mediate PLC-beta-2 activation and lead to the gating of TRPM5. In airway epithelial cells, binding of bitter compounds increases the intracellular calcium ion concentration and stimulates ciliary beat frequency. The chain is Taste receptor type 2 member 46 (TAS2R46) from Pan troglodytes (Chimpanzee).